We begin with the raw amino-acid sequence, 221 residues long: Pre-hexon-linking protein VIII (221 aa).

At threonine 65 the chain carries Phosphothreonine; by host. Positions 113-150 (AAPWSGVKTGSFCGRGLQLAEPPTTAIYPSGLFHLGRG) are excised as a propeptide.

It belongs to the adenoviridae hexon-linking protein family. Interacts with the peripentonal hexons as well as the hexons in the facets. Part of a complex composed of the core-capsid bridging protein, the endosome lysis protein VI and the hexon-linking protein VIII; these interactions bridge the virus core to the capsid. In terms of processing, cleaved by the viral protease during virion maturation. May cause the middle segment to be shed from the capsid.

It is found in the virion. It localises to the host nucleus. Structural component of the virion that acts as a cement protein on the capsid interior and which glue the peripentonal hexons and group-of-nine hexons together. The sequence is that of Pre-hexon-linking protein VIII from Sus scrofa (Pig).